A 142-amino-acid polypeptide reads, in one-letter code: Nucleoside diphosphate kinase (142 aa).

Residues lysine 11, phenylalanine 59, arginine 87, threonine 93, arginine 104, and asparagine 114 each contribute to the ATP site. Histidine 117 (pros-phosphohistidine intermediate) is an active-site residue.

The protein belongs to the NDK family. Homotetramer. Requires Mg(2+) as cofactor.

It localises to the cytoplasm. The catalysed reaction is a 2'-deoxyribonucleoside 5'-diphosphate + ATP = a 2'-deoxyribonucleoside 5'-triphosphate + ADP. It catalyses the reaction a ribonucleoside 5'-diphosphate + ATP = a ribonucleoside 5'-triphosphate + ADP. Its function is as follows. Major role in the synthesis of nucleoside triphosphates other than ATP. The ATP gamma phosphate is transferred to the NDP beta phosphate via a ping-pong mechanism, using a phosphorylated active-site intermediate. The protein is Nucleoside diphosphate kinase of Hahella chejuensis (strain KCTC 2396).